The following is a 492-amino-acid chain: Auxin transporter-like protein 1 (492 aa).

The Cytoplasmic segment spans residues 1-67; the sequence is MVPREQAEEA…DAWFSCASNQ (67 aa). A helical transmembrane segment spans residues 68 to 85; the sequence is VAQVLLTLPYSFSQLGML. Residues 86–87 are Extracellular-facing; sequence SG. The chain crosses the membrane as a helical span at residues 88–108; that stretch reads VLLQLFYGFMGSWTAYLISVL. Over 109–143 the chain is Cytoplasmic; it reads YVEYRSRKEKEGVSFKNHVIQWFEVLDGLLGPYWK. The helical transmembrane segment at 144-164 threads the bilayer; it reads AAGLAFNCTFLLFGSVIQLIA. At 165–180 the chain is on the extracellular side; it reads CASNIYYINDRLDKRT. Residues 181 to 201 form a helical membrane-spanning segment; the sequence is WTYIFGACCATTVFIPSFHNY. R202 is a topological domain (cytoplasmic). The helical transmembrane segment at 203 to 223 threads the bilayer; it reads IWSFLGLGMTTYTAWYLAIAA. At 224–240 the chain is on the extracellular side; sequence LLNGQAEGITHTGPTKL. The helical transmembrane segment at 241–261 threads the bilayer; it reads VLYFTGATNILYTFGGHAVTV. The Cytoplasmic segment spans residues 262 to 274; it reads EIMHAMWKPAKFK. The chain crosses the membrane as a helical span at residues 275-295; it reads YIYLLATLYVFTLTLPSASAM. Over 296–322 the chain is Extracellular; that stretch reads YWAFGDELLTHSNAFSLLPKTGWRDAA. A helical transmembrane segment spans residues 323 to 343; sequence VILMLIHQFITFGFACTPLYF. The Cytoplasmic segment spans residues 344-364; sequence VWEKVIGMHDTKSICLRALAR. The helical transmembrane segment at 365 to 385 threads the bilayer; it reads LPIVVPIWFLAIIFPFFGPIN. Residue S386 is a topological domain, extracellular. A helical transmembrane segment spans residues 387 to 407; that stretch reads AVGALLVSFTVYIIPALAHIL. Residues 408–432 are Cytoplasmic-facing; it reads TYRTASARMNAAEKPPFFLPSWTGM. The chain crosses the membrane as a helical span at residues 433 to 453; the sequence is FVLNMFIVVWVLVVGFGLGGW. Over 454–492 the chain is Extracellular; sequence ASMVNFIRQIDTFGLFAKCYQCPKPAPALAQSPVPLPHH.

This sequence belongs to the amino acid/polyamine transporter 2 family. Amino acid/auxin permease (AAAP) (TC 2.A.18.1) subfamily.

The protein resides in the cell membrane. Functionally, carrier protein involved in proton-driven auxin influx. May mediate the formation of auxin gradient from developing leaves (site of auxin biosynthesis) to tips. The sequence is that of Auxin transporter-like protein 1 from Oryza sativa subsp. japonica (Rice).